The primary structure comprises 866 residues: Sphingomyelin phosphodiesterase 4 (866 aa).

2 positions are modified to phosphoserine: S169 and S285. The residue at position 708 (T708) is a Phosphothreonine. Phosphoserine is present on S792. A helical transmembrane segment spans residues L822–L842.

Mg(2+) is required as a cofactor. As to expression, widely expressed, with highest levels in heart and skeletal muscle. Expressed in skeletal muscle (at protein level). In terms of tissue distribution, expressed in skeletal muscle but a lower levels than isoform 1 (at protein level).

The protein localises to the endoplasmic reticulum membrane. Its subcellular location is the golgi apparatus membrane. The protein resides in the nucleus envelope. It localises to the cell membrane. It is found in the sarcolemma. The catalysed reaction is a sphingomyelin + H2O = phosphocholine + an N-acylsphing-4-enine + H(+). Its activity is regulated as follows. Activated by phosphatidylserine and tumor necrosis factor (TNF). Inhibited by scyphostatin. Catalyzes the hydrolysis of membrane sphingomyelin to form phosphorylcholine and ceramide. It has a relevant role in the homeostasis of membrane sphingolipids, thereby influencing membrane integrity, and endoplasmic reticulum organization and function. May sensitize cells to DNA damage-induced apoptosis. In skeletal muscle, mediates TNF-stimulated oxidant production. The protein is Sphingomyelin phosphodiesterase 4 of Homo sapiens (Human).